Here is a 965-residue protein sequence, read N- to C-terminus: 26S proteasome regulatory subunit rpn2 (965 aa).

PC repeat units lie at residues 385–418 (TATA…PSSS), 424–457 (GAFY…EIVQ), 459–493 (GLLL…VAGS), 494–528 (AAGI…EKII), 530–563 (GLGI…TLRY), 564–599 (AGMF…DVRR), 600–632 (AAVC…PHVR), 634–668 (GSAI…FVRQ), 669–699 (GAMI…FEQV), and 712–744 (GATL…SAIV). Disordered stretches follow at residues 826-883 (AKRA…KSET) and 934-965 (NRDA…DDDD). Basic and acidic residues-rich tracts occupy residues 827–856 (KRAE…KEAT) and 874–883 (SKKEEPKSET). Residues 945–965 (EPGEQEASPPEDFEYPFDDDD) show a composition bias toward acidic residues. Position 952 is a phosphoserine (Ser952).

It belongs to the proteasome subunit S1 family.

In terms of biological role, acts as a regulatory subunit of the 26S proteasome which is involved in the ATP-dependent degradation of ubiquitinated proteins. This Schizosaccharomyces pombe (strain 972 / ATCC 24843) (Fission yeast) protein is 26S proteasome regulatory subunit rpn2 (rpn2).